The following is a 772-amino-acid chain: Phenylalanine--tRNA ligase beta subunit (772 aa).

The tRNA-binding domain occupies 40–158 (IKPSTNLVFA…DHYKTPNQIF (119 aa)). The 72-residue stretch at 397-468 (SVHNVIKNKI…KKISIQEIKP (72 aa)) folds into the B5 domain. The Mg(2+) site is built by Asp-446, Asp-452, Glu-455, and Asp-456. The FDX-ACB domain maps to 691 to 772 (SMYHDVIRDI…QEVNNYLKQF (82 aa)).

Belongs to the phenylalanyl-tRNA synthetase beta subunit family. Type 1 subfamily. As to quaternary structure, tetramer of two alpha and two beta subunits. Requires Mg(2+) as cofactor.

The protein localises to the cytoplasm. It catalyses the reaction tRNA(Phe) + L-phenylalanine + ATP = L-phenylalanyl-tRNA(Phe) + AMP + diphosphate + H(+). The protein is Phenylalanine--tRNA ligase beta subunit (pheT) of Ureaplasma parvum serovar 3 (strain ATCC 700970).